The following is a 255-amino-acid chain: Phosphoribosylformylglycinamidine synthase subunit PurQ (255 aa).

One can recognise a Glutamine amidotransferase type-1 domain in the interval 6-255; that stretch reads TLILRTPGTN…TNAVKWARQV (250 aa). The Nucleophile role is filled by Cys96. Catalysis depends on residues His217 and Glu219.

In terms of assembly, part of the FGAM synthase complex composed of 1 PurL, 1 PurQ and 2 PurS subunits.

The protein localises to the cytoplasm. It catalyses the reaction N(2)-formyl-N(1)-(5-phospho-beta-D-ribosyl)glycinamide + L-glutamine + ATP + H2O = 2-formamido-N(1)-(5-O-phospho-beta-D-ribosyl)acetamidine + L-glutamate + ADP + phosphate + H(+). It carries out the reaction L-glutamine + H2O = L-glutamate + NH4(+). It participates in purine metabolism; IMP biosynthesis via de novo pathway; 5-amino-1-(5-phospho-D-ribosyl)imidazole from N(2)-formyl-N(1)-(5-phospho-D-ribosyl)glycinamide: step 1/2. In terms of biological role, part of the phosphoribosylformylglycinamidine synthase complex involved in the purines biosynthetic pathway. Catalyzes the ATP-dependent conversion of formylglycinamide ribonucleotide (FGAR) and glutamine to yield formylglycinamidine ribonucleotide (FGAM) and glutamate. The FGAM synthase complex is composed of three subunits. PurQ produces an ammonia molecule by converting glutamine to glutamate. PurL transfers the ammonia molecule to FGAR to form FGAM in an ATP-dependent manner. PurS interacts with PurQ and PurL and is thought to assist in the transfer of the ammonia molecule from PurQ to PurL. The sequence is that of Phosphoribosylformylglycinamidine synthase subunit PurQ from Dehalococcoides mccartyi (strain ATCC BAA-2266 / KCTC 15142 / 195) (Dehalococcoides ethenogenes (strain 195)).